A 388-amino-acid polypeptide reads, in one-letter code: Regulator of G-protein signaling 20 (388 aa).

The disordered stretch occupies residues 138-199; the sequence is PGRPSGGRPL…TPGAAPGQPG (62 aa). Over residues 185–197 the composition is skewed to low complexity; that stretch reads PAAQDTPGAAPGQ. In terms of domain architecture, RGS spans 262 to 378; the sequence is SFDKLMVTPA…MNSAVYKDLL (117 aa).

In terms of assembly, forms a complex with G(alpha)z/i2 subunits and mu-opioid receptors; the formation of this complex results in mu-opioid receptor desensitization. Interacts with OPRM1. In terms of processing, fatty acylated. Heavily palmitoylated in the cysteine string motif. N- and O-glycosylated in synapsomal membranes. Post-translationally, serine phosphorylated in synapsomal membranes. In terms of processing, sumoylated with SUMO1 and SUMO2 in synaptosomes. The sumoylated forms act as a scaffold for sequestering mu-opioid receptor-activated G(alpha) subunits. In terms of tissue distribution, isoform 5 is expressed in brain at high levels in the caudate nucleus and temporal lobe.

Its subcellular location is the membrane. The protein localises to the nucleus. The protein resides in the cytoplasm. Inhibits signal transduction by increasing the GTPase activity of G protein alpha subunits thereby driving them into their inactive GDP-bound form. Binds selectively to G(z)-alpha and G(alpha)-i2 subunits, accelerates their GTPase activity and regulates their signaling activities. The G(z)-alpha activity is inhibited by the phosphorylation and palmitoylation of the G-protein. Negatively regulates mu-opioid receptor-mediated activation of the G-proteins. This Homo sapiens (Human) protein is Regulator of G-protein signaling 20 (RGS20).